The following is a 186-amino-acid chain: MSDTATYTPRLRAKYTETIRAAMKEKFGYANDMMIPRLDKIVINMGVGEASQDSKKIKGALEDLEAITGQKPVKTVAKKSIAGFKLREEQVIGAKVTLRQDRMYEFLDRLITIALPRVRDFRGLNGKSFDGRGNYAMGMKEHIVFPEIDYDKVEKIRGMDIVVCTTAGNDEEAKALLAEFDFPFTN.

This sequence belongs to the universal ribosomal protein uL5 family. In terms of assembly, part of the 50S ribosomal subunit; part of the 5S rRNA/L5/L18/L25 subcomplex. Contacts the 5S rRNA and the P site tRNA. Forms a bridge to the 30S subunit in the 70S ribosome.

Its function is as follows. This is one of the proteins that bind and probably mediate the attachment of the 5S RNA into the large ribosomal subunit, where it forms part of the central protuberance. In the 70S ribosome it contacts protein S13 of the 30S subunit (bridge B1b), connecting the 2 subunits; this bridge is implicated in subunit movement. Contacts the P site tRNA; the 5S rRNA and some of its associated proteins might help stabilize positioning of ribosome-bound tRNAs. The protein is Large ribosomal subunit protein uL5 of Maricaulis maris (strain MCS10) (Caulobacter maris).